Here is a 400-residue protein sequence, read N- to C-terminus: Elongation factor Tu (400 aa).

In terms of domain architecture, tr-type G spans Lys-10 to Glu-209. The segment at Gly-19–Thr-26 is G1. A GTP-binding site is contributed by Gly-19–Thr-26. A Mg(2+)-binding site is contributed by Thr-26. A G2 region spans residues Gly-60–Asn-64. The interval Asp-81 to Gly-84 is G3. GTP is bound by residues Asp-81–His-85 and Asn-136–Asp-139. Positions Asn-136–Asp-139 are G4. Positions Ser-174–Leu-176 are G5.

The protein belongs to the TRAFAC class translation factor GTPase superfamily. Classic translation factor GTPase family. EF-Tu/EF-1A subfamily. As to quaternary structure, monomer.

The protein localises to the cytoplasm. The catalysed reaction is GTP + H2O = GDP + phosphate + H(+). Functionally, GTP hydrolase that promotes the GTP-dependent binding of aminoacyl-tRNA to the A-site of ribosomes during protein biosynthesis. This Ruminiclostridium cellulolyticum (strain ATCC 35319 / DSM 5812 / JCM 6584 / H10) (Clostridium cellulolyticum) protein is Elongation factor Tu.